Reading from the N-terminus, the 343-residue chain is Galactoside alpha-(1,2)-fucosyltransferase 2 (343 aa).

Over 1–14 the chain is Cytoplasmic; sequence MLVVQMPFSFPMAH. The chain crosses the membrane as a helical; Signal-anchor for type II membrane protein span at residues 15–28; it reads FILFVFTVSTIFHV. Topologically, residues 29–343 are lumenal; that stretch reads QQRLAKIQAM…AADLSPLLKH (315 aa). 3 N-linked (GlcNAc...) asparagine glycosylation sites follow: Asn188, Asn282, and Asn308.

It belongs to the glycosyltransferase 11 family.

The protein resides in the golgi apparatus. It is found in the golgi stack membrane. The enzyme catalyses a beta-D-galactosyl-(1-&gt;3)-N-acetyl-beta-D-glucosaminyl derivative + GDP-beta-L-fucose = an alpha-L-Fuc-(1-&gt;2)-beta-D-Gal-(1-&gt;3)-beta-D-GlcNAc derivative + GDP + H(+). It catalyses the reaction a beta-D-galactosyl-(1-&gt;4)-N-acetyl-beta-D-glucosaminyl derivative + GDP-beta-L-fucose = an alpha-L-Fuc-(1-&gt;2)-beta-D-Gal-(1-&gt;4)-beta-D-GlcNAc derivative + GDP + H(+). It carries out the reaction a neolactoside nLc4Cer + GDP-beta-L-fucose = a neolactoside IV(2)-alpha-Fuc-nLc4Cer + GDP + H(+). The catalysed reaction is a neolactoside nLc4Cer(d18:1(4E)) + GDP-beta-L-fucose = a neolactoside IV(2)-alpha-Fuc-nLc4Cer(d18:1(4E)) + GDP + H(+). The enzyme catalyses a ganglioside GM1 + GDP-beta-L-fucose = a ganglioside Fuc-GM1 + GDP + H(+). It catalyses the reaction a ganglioside GA1 + GDP-beta-L-fucose = a ganglioside Fuc-GA1 + GDP + H(+). It carries out the reaction Lc4Cer + GDP-beta-L-fucose = alpha-L-fucosyl-(1-&gt;2)-beta-D-galactosyl-(1-&gt;3)-N-acetyl-beta-D-glucosaminyl-(1-&gt;3)-beta-D-galactosyl-(1-&gt;4)-beta-D-glucosyl-(1&lt;-&gt;1')-ceramide + GDP + H(+). The catalysed reaction is a beta-D-Gal-(1-&gt;3)-beta-D-GlcNAc-(1-&gt;3)-beta-D-Gal-(1-&gt;4)-beta-D-Glc-(1&lt;-&gt;1')-Cer(d18:1(4E)) + GDP-beta-L-fucose = alpha-L-fucosyl-(1-&gt;2)- beta-D-galactosyl-(1-&gt;3)-N-acetyl-beta-D-glucosaminyl-(1-&gt;3)-beta-D-galactosyl-(1-&gt;4)-beta-D-glucosyl-(1&lt;-&gt;1')-N-acylsphing-4-enine + GDP + H(+). The enzyme catalyses a ganglioside GD1b + GDP-beta-L-fucose = a ganglioside Fuc-GD1b + GDP + H(+). It catalyses the reaction a ganglioside GM1 (d18:1(4E)) + GDP-beta-L-fucose = a ganglioside Fuc-GM1 (d18:1(4E)) + GDP + H(+). It carries out the reaction a globoside GalGb4Cer (d18:1(4E)) + GDP-beta-L-fucose = a globoside Globo-H (d18:1(4E)) + GDP + H(+). The catalysed reaction is a lactoside III(4)-a-Fuc-Lc4Cer + GDP-beta-L-fucose = a lactoside IV(2),III(4)-a-[Fuc]2-Lc4Cer + GDP + H(+). The enzyme catalyses beta-D-galactosyl-(1-&gt;3)-N-acetyl-D-galactosamine + GDP-beta-L-fucose = alpha-L-fucosyl-(1-&gt;2)-beta-D-galactosyl-(1-&gt;3)-N-acetyl-D-galactosamine + GDP + H(+). It functions in the pathway protein modification; protein glycosylation. Functionally, catalyzes the transfer of L-fucose, from a guanosine diphosphate-beta-L-fucose, to the terminal galactose on both O- and N-linked glycans chains of cell surface glycoproteins and glycolipids and the resulting epitope regulates several processes such as cell-cell interaction including host-microbe interaction, cell surface expression and cell proliferation. Preferentially fucosylates gangliosides GA1 and GM1 in the antrum, cecum and colon and in the female reproductive organs. Fucosylated host glycoproteins or glycolipids mediate interaction with intestinal microbiota influencing its composition. Creates a soluble precursor oligosaccharide FuC-alpha ((1,2)Galbeta-) called the H antigen which is an essential substrate for the final step in the soluble ABO blood group antigen synthesis pathway. The protein is Galactoside alpha-(1,2)-fucosyltransferase 2 of Hylobates lar (Lar gibbon).